Here is a 418-residue protein sequence, read N- to C-terminus: NADH-quinone oxidoreductase subunit D (418 aa).

The protein belongs to the complex I 49 kDa subunit family. As to quaternary structure, NDH-1 is composed of 14 different subunits. Subunits NuoB, C, D, E, F, and G constitute the peripheral sector of the complex.

The protein resides in the cell inner membrane. The enzyme catalyses a quinone + NADH + 5 H(+)(in) = a quinol + NAD(+) + 4 H(+)(out). NDH-1 shuttles electrons from NADH, via FMN and iron-sulfur (Fe-S) centers, to quinones in the respiratory chain. The immediate electron acceptor for the enzyme in this species is believed to be ubiquinone. Couples the redox reaction to proton translocation (for every two electrons transferred, four hydrogen ions are translocated across the cytoplasmic membrane), and thus conserves the redox energy in a proton gradient. The sequence is that of NADH-quinone oxidoreductase subunit D from Methylacidiphilum infernorum (isolate V4) (Methylokorus infernorum (strain V4)).